A 270-amino-acid polypeptide reads, in one-letter code: Imidazole glycerol phosphate synthase subunit HisF (270 aa).

Active-site residues include D11 and D130.

Belongs to the HisA/HisF family. In terms of assembly, heterodimer of HisH and HisF.

It is found in the cytoplasm. The catalysed reaction is 5-[(5-phospho-1-deoxy-D-ribulos-1-ylimino)methylamino]-1-(5-phospho-beta-D-ribosyl)imidazole-4-carboxamide + L-glutamine = D-erythro-1-(imidazol-4-yl)glycerol 3-phosphate + 5-amino-1-(5-phospho-beta-D-ribosyl)imidazole-4-carboxamide + L-glutamate + H(+). The protein operates within amino-acid biosynthesis; L-histidine biosynthesis; L-histidine from 5-phospho-alpha-D-ribose 1-diphosphate: step 5/9. Functionally, IGPS catalyzes the conversion of PRFAR and glutamine to IGP, AICAR and glutamate. The HisF subunit catalyzes the cyclization activity that produces IGP and AICAR from PRFAR using the ammonia provided by the HisH subunit. This chain is Imidazole glycerol phosphate synthase subunit HisF, found in Sorangium cellulosum (strain So ce56) (Polyangium cellulosum (strain So ce56)).